A 337-amino-acid polypeptide reads, in one-letter code: MAKEAVKYVWEGAIPLQIHLHKSDVASHPAPPPALVLAPRIGYLPLLIPLIKPYFKDSLPPGEDSIWFDYKGFPLKWYIPTGVLFDLLCAEPERPWNLTIHFRGYPCNILIPCEGEDSVKWNFVNSLKEAQYIINGNCKNVMNMSQSDQEDLWTSVMNGDLDAYTRLSPKLKMGTVEDEFSRKTSLSSPQSQQVVPETEVAGQVKTARIPVRLYVRSLNKDFENLEDVPEIDTWDDISYLNRPVEFLKEEGKCFTLRDAIKSLLPEFMGDRAQTSGEERSIDDTEEADGSREMGEIKLVRIQGIEMKLEIPFSWVVNNLMNPEFYLHISVLVKAPQR.

Residue Lys-128 forms a Glycyl lysine isopeptide (Lys-Gly) (interchain with G-Cter in ATG12) linkage. The tract at residues 271–290 (RAQTSGEERSIDDTEEADGS) is disordered. The span at 276 to 290 (GEERSIDDTEEADGS) shows a compositional bias: basic and acidic residues.

Belongs to the ATG5 family. In terms of assembly, conjugated to ATG12. In terms of processing, conjugated to ATG12; which is essential for autophagy. Conjugation with ATG12 involves ATG7 as an E1-like activating enzyme and ATG10 as an E2-like conjugating enzyme. Ubiquitous.

It is found in the cytoplasm. Required for autophagy. Conjugation to ATG12 is essential for plant nutrient recycling. Involved in a negative feedback loop that modulates NPR1-dependent salicylic acid (SA) signaling and limits senescence and immunity-related programmed cell death (PCD) in plants. Involved in complete proteolysis of chloroplast stroma proteins in senescent leaves. Involved in the degradation of damaged peroxisomes. The chain is Autophagy protein 5 from Arabidopsis thaliana (Mouse-ear cress).